The chain runs to 203 residues: Glycerol-3-phosphate acyltransferase (203 aa).

Helical transmembrane passes span 13–33 (TLAC…LILT), 66–86 (TLLL…LWGV), 88–108 (AGMA…WLSF), 118–138 (IGVL…AWLA), and 156–176 (IIPV…FAVM).

The protein belongs to the PlsY family. In terms of assembly, probably interacts with PlsX.

Its subcellular location is the cell inner membrane. The enzyme catalyses an acyl phosphate + sn-glycerol 3-phosphate = a 1-acyl-sn-glycero-3-phosphate + phosphate. The protein operates within lipid metabolism; phospholipid metabolism. In terms of biological role, catalyzes the transfer of an acyl group from acyl-phosphate (acyl-PO(4)) to glycerol-3-phosphate (G3P) to form lysophosphatidic acid (LPA). This enzyme utilizes acyl-phosphate as fatty acyl donor, but not acyl-CoA or acyl-ACP. The sequence is that of Glycerol-3-phosphate acyltransferase from Sinorhizobium medicae (strain WSM419) (Ensifer medicae).